Consider the following 134-residue polypeptide: Mediator of RNA polymerase II transcription subunit 10 (134 aa).

This sequence belongs to the Mediator complex subunit 10 family. As to quaternary structure, component of the Mediator complex.

The protein localises to the nucleus. Functionally, component of the Mediator complex, a coactivator involved in the regulated transcription of nearly all RNA polymerase II-dependent genes. Mediator functions as a bridge to convey information from gene-specific regulatory proteins to the basal RNA polymerase II transcription machinery. Mediator is recruited to promoters by direct interactions with regulatory proteins and serves as a scaffold for the assembly of a functional preinitiation complex with RNA polymerase II and the general transcription factors. Negatively regulates the Wnt signaling pathway and positively regulates the Nodal signaling pathway. Required for cardiac cushion formation. The sequence is that of Mediator of RNA polymerase II transcription subunit 10 (med10) from Danio rerio (Zebrafish).